The primary structure comprises 718 residues: Acetolactate synthase, mitochondrial (718 aa).

2 disordered regions span residues methionine 1 to tyrosine 50 and arginine 72 to proline 101. The segment covering arginine 32 to alanine 45 has biased composition (polar residues). Residues serine 76 to proline 99 are compositionally biased toward low complexity. Residue glutamate 173 participates in thiamine diphosphate binding. FAD is bound at residue arginine 275. Positions isoleucine 296 to aspartate 327 are disordered. Positions serine 306 to proline 325 are enriched in low complexity. Residues histidine 397–arginine 418 and glutamate 449–aspartate 468 contribute to the FAD site. The tract at residues glutamine 541 to phenylalanine 621 is thiamine pyrophosphate binding. Aspartate 592 and asparagine 619 together coordinate Mg(2+).

This sequence belongs to the TPP enzyme family. Requires Mg(2+) as cofactor. It depends on thiamine diphosphate as a cofactor.

Its subcellular location is the mitochondrion. The catalysed reaction is 2 pyruvate + H(+) = (2S)-2-acetolactate + CO2. The protein operates within amino-acid biosynthesis; L-isoleucine biosynthesis; L-isoleucine from 2-oxobutanoate: step 1/4. It participates in amino-acid biosynthesis; L-valine biosynthesis; L-valine from pyruvate: step 1/4. In Cryptococcus neoformans var. neoformans serotype D (strain JEC21 / ATCC MYA-565) (Filobasidiella neoformans), this protein is Acetolactate synthase, mitochondrial (ILV2).